The primary structure comprises 305 residues: Protein FdhE homolog (305 aa).

This sequence belongs to the FdhE family.

The protein resides in the cytoplasm. Necessary for formate dehydrogenase activity. This chain is Protein FdhE homolog, found in Haemophilus ducreyi (strain 35000HP / ATCC 700724).